A 148-amino-acid chain; its full sequence is UPAR/Ly6 domain-containing protein bero (148 aa).

The N-terminal stretch at 1–23 (MVSALKCSLAVAVMISLACSAYA) is a signal peptide. Intrachain disulfides connect cysteine 26-cysteine 72, cysteine 29-cysteine 37, cysteine 51-cysteine 90, cysteine 102-cysteine 116, and cysteine 119-cysteine 124. A glycan (N-linked (GlcNAc...) asparagine) is linked at asparagine 68. The N-linked (GlcNAc...) asparagine glycan is linked to asparagine 125. Asparagine 125 is lipidated: GPI-anchor amidated asparagine. Residues 126–148 (GSSSLAPIAGAILLFFGVARLLA) constitute a propeptide, removed in mature form. The chain crosses the membrane as a helical span at residues 128–148 (SSLAPIAGAILLFFGVARLLA).

Belongs to the quiver family.

Its subcellular location is the cell membrane. The protein resides in the membrane. The protein localises to the perikaryon. It is found in the cell projection. It localises to the neuron projection. Its function is as follows. Necessary for the maintenance of persistent fluctuating activities and suppression of acute evoked activities in abdominal leucokinin-producing (ABLK) neurons to negatively regulate neuron excitability involved in nociceptive (perception of pain) behavioral responses. The polypeptide is UPAR/Ly6 domain-containing protein bero (Drosophila melanogaster (Fruit fly)).